Here is an 898-residue protein sequence, read N- to C-terminus: Fasciclin-2 (898 aa).

Residues 1–22 form the signal peptide; sequence MRTVACAVLLACFMGCLAGAWA. Topologically, residues 23 to 764 are extracellular; sequence QSAGLEILPN…EDGSEGQMSS (742 aa). Ig-like C2-type domains follow at residues 31–124, 134–219, 226–316, 321–423, and 428–525; these read PNSE…KQLS, PITW…RPIR, PQMS…VEVT, PRIG…GHLM, and PSFA…IMLR. N-linked (GlcNAc...) asparagine glycans are attached at residues asparagine 35, asparagine 51, asparagine 149, asparagine 192, asparagine 297, and asparagine 328. Cysteines 48 and 113 form a disulfide. 2 disulfide bridges follow: cysteine 156-cysteine 203 and cysteine 248-cysteine 300. An intrachain disulfide couples cysteine 343 to cysteine 407. 3 N-linked (GlcNAc...) asparagine glycosylation sites follow: asparagine 447, asparagine 457, and asparagine 580. Cysteine 450 and cysteine 509 are oxidised to a cystine. 2 Fibronectin type-III domains span residues 532–626 and 644–745; these read AVLQ…TPRI and GTEN…VKDP. Residues 765 to 782 traverse the membrane as a helical segment; sequence AAIVVLVVAALLLALLVV. The Cytoplasmic portion of the chain corresponds to 783–898; that stretch reads DLVCCLVWRG…TSFVGKDSAV (116 aa).

The protein resides in the membrane. Functionally, neuronal recognition molecule. Involved in a pathway recognition for axons during the development of nerve fascicles. The chain is Fasciclin-2 (FAS2) from Schistocerca americana (American grasshopper).